The following is a 173-amino-acid chain: Ribosome maturation factor RimM (173 aa).

Residues 98 to 170 (EGEFYWCDLI…IMTVSPTEGL (73 aa)) form the PRC barrel domain.

It belongs to the RimM family. As to quaternary structure, binds ribosomal protein uS19.

The protein localises to the cytoplasm. Functionally, an accessory protein needed during the final step in the assembly of 30S ribosomal subunit, possibly for assembly of the head region. Essential for efficient processing of 16S rRNA. May be needed both before and after RbfA during the maturation of 16S rRNA. It has affinity for free ribosomal 30S subunits but not for 70S ribosomes. This chain is Ribosome maturation factor RimM, found in Geobacter metallireducens (strain ATCC 53774 / DSM 7210 / GS-15).